Reading from the N-terminus, the 106-residue chain is Small ribosomal subunit protein uS17 (106 aa).

This sequence belongs to the universal ribosomal protein uS17 family. Part of the 30S ribosomal subunit.

Functionally, one of the primary rRNA binding proteins, it binds specifically to the 5'-end of 16S ribosomal RNA. The protein is Small ribosomal subunit protein uS17 of Picrophilus torridus (strain ATCC 700027 / DSM 9790 / JCM 10055 / NBRC 100828 / KAW 2/3).